Consider the following 419-residue polypeptide: Carbohydrate sulfotransferase 12 (419 aa).

At 1 to 5 (MTKPR) the chain is on the cytoplasmic side. A helical; Signal-anchor for type II membrane protein membrane pass occupies residues 6-26 (LFRLWLVLGSALMILLIIVYW). Topologically, residues 27–419 (DNVGTAHFYL…YPKPENLLRD (393 aa)) are lumenal. The span at 78–87 (HNDLSRRKTE) shows a compositional bias: basic and acidic residues. Residues 78 to 99 (HNDLSRRKTEQPPVPAPSKPVL) are disordered. N-linked (GlcNAc...) asparagine glycosylation occurs at Asn-139. 176–182 (PKVACTN) is a binding site for 3'-phosphoadenylyl sulfate. Residue Asn-214 is glycosylated (N-linked (GlcNAc...) asparagine). 250–258 (RDPFVRLIS) is a binding site for 3'-phosphoadenylyl sulfate. Asn-285 and Asn-375 each carry an N-linked (GlcNAc...) asparagine glycan.

The protein belongs to the sulfotransferase 2 family.

It is found in the golgi apparatus membrane. It carries out the reaction chondroitin beta-D-glucuronate + n 3'-phosphoadenylyl sulfate = chondroitin 4'-sulfate + n adenosine 3',5'-bisphosphate + n H(+). Its function is as follows. Catalyzes the transfer of sulfate to position 4 of the N-acetylgalactosamine (GalNAc) residue of chondroitin and desulfated dermatan sulfate. Chondroitin sulfate constitutes the predominant proteoglycan present in cartilage and is distributed on the surfaces of many cells and extracellular matrices. Activity toward partially desulfated dermatan sulfate is however lower. Does not form 4, 6-di-O-sulfated GalNAc when chondroitin sulfate C is used as an acceptor. This chain is Carbohydrate sulfotransferase 12 (Chst12), found in Mus musculus (Mouse).